The following is a 101-amino-acid chain: Large ribosomal subunit protein uL24 (101 aa).

The protein belongs to the universal ribosomal protein uL24 family. Part of the 50S ribosomal subunit.

One of two assembly initiator proteins, it binds directly to the 5'-end of the 23S rRNA, where it nucleates assembly of the 50S subunit. Functionally, one of the proteins that surrounds the polypeptide exit tunnel on the outside of the subunit. The chain is Large ribosomal subunit protein uL24 from Streptococcus gordonii (strain Challis / ATCC 35105 / BCRC 15272 / CH1 / DL1 / V288).